Reading from the N-terminus, the 289-residue chain is 4-hydroxy-tetrahydrodipicolinate synthase (289 aa).

Residue threonine 43 coordinates pyruvate. Residue tyrosine 131 is the Proton donor/acceptor of the active site. Lysine 160 functions as the Schiff-base intermediate with substrate in the catalytic mechanism. A pyruvate-binding site is contributed by valine 200.

This sequence belongs to the DapA family. In terms of assembly, homotetramer; dimer of dimers.

The protein localises to the cytoplasm. It catalyses the reaction L-aspartate 4-semialdehyde + pyruvate = (2S,4S)-4-hydroxy-2,3,4,5-tetrahydrodipicolinate + H2O + H(+). It functions in the pathway amino-acid biosynthesis; L-lysine biosynthesis via DAP pathway; (S)-tetrahydrodipicolinate from L-aspartate: step 3/4. Its function is as follows. Catalyzes the condensation of (S)-aspartate-beta-semialdehyde [(S)-ASA] and pyruvate to 4-hydroxy-tetrahydrodipicolinate (HTPA). This Methanococcus maripaludis (strain C6 / ATCC BAA-1332) protein is 4-hydroxy-tetrahydrodipicolinate synthase.